Reading from the N-terminus, the 385-residue chain is 3,5,7-trioxododecanoyl-CoA synthase (385 aa).

The active site involves Cys-157.

This sequence belongs to the thiolase-like superfamily. Chalcone/stilbene synthases family. In terms of tissue distribution, expressed in bracts, flowers and young leaves. Not detected in mature leaves, roots and stems. Expressed in glandular trichomes.

The catalysed reaction is hexanoyl-CoA + 3 malonyl-CoA + 3 H(+) = 3,5,7-trioxododecanoyl-CoA + 3 CO2 + 3 CoA. The enzyme catalyses 3,5,7-trioxododecanoyl-CoA = olivetol + CO2 + CoA. Its pathway is secondary metabolite biosynthesis; terpenoid biosynthesis. Involved in the biosynthesis of cannabinoids-related terpenophenolic natural products, which have pharmacological activity. Polyketide synthase responsible for olivetol biosynthesis, from a C(12)-polyketide, probably 3,5,7-trioxododecanoyl-CoA. Catalyzes the first step in the cannabinoids biosynthetic pathway. The preferred substrate is hexanoyl-CoA, but also accepts CoA esters with C4 to C8 aliphatic side chains. When using malonyl-CoA and hexanoyl-CoA as substrates, produces undetermined compounds distinct form olivetol or olivetolic acid that could be hexanoyl triacetic acid lactone (HTAL) and pentyl diacetic acid lactone (PDAL). Produces olivetolic acid when acting in concert with olivetolic acid cyclase (OAC). This chain is 3,5,7-trioxododecanoyl-CoA synthase, found in Cannabis sativa (Hemp).